Here is a 493-residue protein sequence, read N- to C-terminus: EGF-containing fibulin-like extracellular matrix protein 1 (493 aa).

The N-terminal stretch at 1-17 is a signal peptide; the sequence is MLKALFLTMLTLALVKS. The region spanning 26–71 is the EGF-like 1; atypical domain; the sequence is YTQCTDGYEWDPVRQQCKDIDECDIVPDACKGGMKCVNHYGGYLCL. One can recognise an EGF-like 2; calcium-binding domain in the interval 173-213; it reads DIDECTAGTHNCRADQVCINLRGSFACQCPPGYQKRGEQCV. 15 disulfide bridges follow: Cys-177–Cys-190, Cys-184–Cys-199, Cys-201–Cys-212, Cys-218–Cys-228, Cys-224–Cys-237, Cys-239–Cys-252, Cys-258–Cys-268, Cys-264–Cys-277, Cys-279–Cys-292, Cys-298–Cys-309, Cys-305–Cys-318, Cys-320–Cys-332, Cys-338–Cys-350, Cys-344–Cys-359, and Cys-365–Cys-377. The EGF-like 3; calcium-binding domain occupies 214–253; that stretch reads DIDECTIPPYCHQRCVNTPGSFYCQCSPGFQLAANNYTCV. Residue Asn-249 is glycosylated (N-linked (GlcNAc...) asparagine). The EGF-like 4; calcium-binding domain occupies 254–293; it reads DINECDASNQCAQQCYNILGSFICQCNQGYELSSDRLNCE. A mediates interaction with TIMP3 region spans residues 259-493; the sequence is DASNQCAQQC…LTIIVGPFSF (235 aa). The 40-residue stretch at 294-333 folds into the EGF-like 5; calcium-binding domain; it reads DIDECRTSSYLCQYQCVNEPGKFSCMCPQGYQVVRSRTCQ. An EGF-like 6; calcium-binding domain is found at 334–378; sequence DINECETTNECREDEMCWNYHGGFRCYPRNPCQDPYILTPENRCV.

Belongs to the fibulin family. Interacts with ECM1. Interacts with TIMP3.

It localises to the secreted. The protein resides in the extracellular space. The protein localises to the extracellular matrix. Functionally, binds EGFR, the EGF receptor, inducing EGFR autophosphorylation and the activation of downstream signaling pathways. May play a role in cell adhesion and migration. May function as a negative regulator of chondrocyte differentiation. In the olfactory epithelium, it may regulate glial cell migration, differentiation and the ability of glial cells to support neuronal neurite outgrowth. This is EGF-containing fibulin-like extracellular matrix protein 1 (EFEMP1) from Macaca fascicularis (Crab-eating macaque).